The sequence spans 373 residues: Queuine tRNA-ribosyltransferase (373 aa).

The active-site Proton acceptor is Asp-94. Substrate is bound by residues 94 to 98, Asp-148, Gln-190, and Gly-217; that span reads DSGGF. The tract at residues 248 to 254 is RNA binding; the sequence is GVGSPDC. Asp-267 acts as the Nucleophile in catalysis. An RNA binding; important for wobble base 34 recognition region spans residues 272–276; that stretch reads TRIAR. Zn(2+) is bound by residues Cys-305, Cys-307, Cys-310, and His-336.

This sequence belongs to the queuine tRNA-ribosyltransferase family. As to quaternary structure, homodimer. Within each dimer, one monomer is responsible for RNA recognition and catalysis, while the other monomer binds to the replacement base PreQ1. Zn(2+) is required as a cofactor.

The catalysed reaction is 7-aminomethyl-7-carbaguanine + guanosine(34) in tRNA = 7-aminomethyl-7-carbaguanosine(34) in tRNA + guanine. It functions in the pathway tRNA modification; tRNA-queuosine biosynthesis. Catalyzes the base-exchange of a guanine (G) residue with the queuine precursor 7-aminomethyl-7-deazaguanine (PreQ1) at position 34 (anticodon wobble position) in tRNAs with GU(N) anticodons (tRNA-Asp, -Asn, -His and -Tyr). Catalysis occurs through a double-displacement mechanism. The nucleophile active site attacks the C1' of nucleotide 34 to detach the guanine base from the RNA, forming a covalent enzyme-RNA intermediate. The proton acceptor active site deprotonates the incoming PreQ1, allowing a nucleophilic attack on the C1' of the ribose to form the product. After dissociation, two additional enzymatic reactions on the tRNA convert PreQ1 to queuine (Q), resulting in the hypermodified nucleoside queuosine (7-(((4,5-cis-dihydroxy-2-cyclopenten-1-yl)amino)methyl)-7-deazaguanosine). In Moorella thermoacetica (strain ATCC 39073 / JCM 9320), this protein is Queuine tRNA-ribosyltransferase.